Consider the following 73-residue polypeptide: uncharacterized protein (73 aa).

2 helical membrane-spanning segments follow: residues 4–24 (LIPV…SPCV) and 51–71 (AGAI…IIAL).

The protein resides in the cell membrane. This is an uncharacterized protein from Escherichia coli O157:H7.